The chain runs to 239 residues: Skn-1 dependent zygotic transcript 1 protein (239 aa).

Functionally, may have a role in mesendoderm development during embryogenesis. The chain is Skn-1 dependent zygotic transcript 1 protein from Caenorhabditis briggsae.